The primary structure comprises 369 residues: Protein phosphatase 1 regulatory inhibitor subunit PPP1R8 homolog (369 aa).

A compositionally biased stretch (basic and acidic residues) spans 1–11 (MYGRSGLDRFK). The tract at residues 1–26 (MYGRSGLDRFKKSQTSEPFSVSANPP) is disordered. The segment covering 13–23 (SQTSEPFSVSA) has biased composition (polar residues). An FHA domain is found at 87–138 (HIFGRQHQTCDFVLDHQSVSRQHAAVVPHKNGSIFVIDLGSAHGTFVANERL). Residues 345–369 (VSQPAAETECGGVGEEDDNDDLFGD) form a disordered region. Acidic residues predominate over residues 358-369 (GEEDDNDDLFGD).

Interacts with human protein phosphatase PPP1C.

In terms of biological role, inhibitor of protein-phosphatase 1 (PP1). Binds to and inhibits PP1 activity. The sequence is that of Protein phosphatase 1 regulatory inhibitor subunit PPP1R8 homolog from Arabidopsis thaliana (Mouse-ear cress).